Here is a 105-residue protein sequence, read N- to C-terminus: ATP synthase F(0) complex subunit a (105 aa).

The next 3 membrane-spanning stretches (helical) occupy residues 14 to 34 (EGTP…SLFI), 47 to 67 (LTAG…LLPM), and 72 to 92 (AILT…VAMI).

This sequence belongs to the ATPase A chain family. Component of the ATP synthase complex composed at least of ATP5F1A/subunit alpha, ATP5F1B/subunit beta, ATP5MC1/subunit c (homooctomer), MT-ATP6/subunit a, MT-ATP8/subunit 8, ATP5ME/subunit e, ATP5MF/subunit f, ATP5MG/subunit g, ATP5MK/subunit k, ATP5MJ/subunit j, ATP5F1C/subunit gamma, ATP5F1D/subunit delta, ATP5F1E/subunit epsilon, ATP5PF/subunit F6, ATP5PB/subunit b, ATP5PD/subunit d, ATP5PO/subunit OSCP. ATP synthase complex consists of a soluble F(1) head domain (subunits alpha(3) and beta(3)) - the catalytic core - and a membrane F(0) domain - the membrane proton channel (subunits c, a, 8, e, f, g, k and j). These two domains are linked by a central stalk (subunits gamma, delta, and epsilon) rotating inside the F1 region and a stationary peripheral stalk (subunits F6, b, d, and OSCP). Interacts with DNAJC30; interaction is direct.

Its subcellular location is the mitochondrion inner membrane. The enzyme catalyses H(+)(in) = H(+)(out). In terms of biological role, subunit a, of the mitochondrial membrane ATP synthase complex (F(1)F(0) ATP synthase or Complex V) that produces ATP from ADP in the presence of a proton gradient across the membrane which is generated by electron transport complexes of the respiratory chain. ATP synthase complex consist of a soluble F(1) head domain - the catalytic core - and a membrane F(1) domain - the membrane proton channel. These two domains are linked by a central stalk rotating inside the F(1) region and a stationary peripheral stalk. During catalysis, ATP synthesis in the catalytic domain of F(1) is coupled via a rotary mechanism of the central stalk subunits to proton translocation. With the subunit c (ATP5MC1), forms the proton-conducting channel in the F(0) domain, that contains two crucial half-channels (inlet and outlet) that facilitate proton movement from the mitochondrial intermembrane space (IMS) into the matrix. Protons are taken up via the inlet half-channel and released through the outlet half-channel, following a Grotthuss mechanism. The polypeptide is ATP synthase F(0) complex subunit a (Salmo trutta (Brown trout)).